Consider the following 151-residue polypeptide: SsrA-binding protein (151 aa).

A disordered region spans residues 131 to 151 (KRESIKEKDWKRDQSRLIRQK).

Belongs to the SmpB family.

The protein localises to the cytoplasm. Required for rescue of stalled ribosomes mediated by trans-translation. Binds to transfer-messenger RNA (tmRNA), required for stable association of tmRNA with ribosomes. tmRNA and SmpB together mimic tRNA shape, replacing the anticodon stem-loop with SmpB. tmRNA is encoded by the ssrA gene; the 2 termini fold to resemble tRNA(Ala) and it encodes a 'tag peptide', a short internal open reading frame. During trans-translation Ala-aminoacylated tmRNA acts like a tRNA, entering the A-site of stalled ribosomes, displacing the stalled mRNA. The ribosome then switches to translate the ORF on the tmRNA; the nascent peptide is terminated with the 'tag peptide' encoded by the tmRNA and targeted for degradation. The ribosome is freed to recommence translation, which seems to be the essential function of trans-translation. The protein is SsrA-binding protein of Rickettsia bellii (strain OSU 85-389).